Consider the following 454-residue polypeptide: Macrophage scavenger receptor types I and II (454 aa).

The interval Met-1–Lys-22 is disordered. The Cytoplasmic segment spans residues Met-1–Lys-50. Phosphoserine is present on Ser-27. Residues Ala-51–Ala-73 traverse the membrane as a helical; Signal-anchor for type II membrane protein segment. The interval Gln-74–Arg-109 is spacer. Topologically, residues Gln-74–Leu-454 are extracellular. Asn-82, Asn-102, Asn-143, Asn-184, Asn-221, Asn-249, and Asn-267 each carry an N-linked (GlcNAc...) asparagine glycan. The stretch at Val-199–Leu-256 forms a coiled coil. The tract at residues Asn-267–Leu-347 is disordered. One can recognise a Collagen-like domain in the interval Gly-273–Gly-344. Residues Val-353–Thr-453 form the SRCR domain. Disulfide bonds link Cys-378–Cys-442, Cys-391–Cys-452, and Cys-422–Cys-432.

In terms of assembly, homotrimer. Interacts with MYO18A.

It is found in the membrane. Its function is as follows. Membrane glycoproteins implicated in the pathologic deposition of cholesterol in arterial walls during atherogenesis. Two types of receptor subunits exist. These receptors mediate the endocytosis of a diverse group of macromolecules, including modified low density lipoproteins (LDL). The sequence is that of Macrophage scavenger receptor types I and II (MSR1) from Oryctolagus cuniculus (Rabbit).